Consider the following 286-residue polypeptide: ATP synthase gamma chain (286 aa).

It belongs to the ATPase gamma chain family. In terms of assembly, F-type ATPases have 2 components, CF(1) - the catalytic core - and CF(0) - the membrane proton channel. CF(1) has five subunits: alpha(3), beta(3), gamma(1), delta(1), epsilon(1). CF(0) has three main subunits: a, b and c.

The protein resides in the cell inner membrane. Its function is as follows. Produces ATP from ADP in the presence of a proton gradient across the membrane. The gamma chain is believed to be important in regulating ATPase activity and the flow of protons through the CF(0) complex. This chain is ATP synthase gamma chain, found in Dechloromonas aromatica (strain RCB).